We begin with the raw amino-acid sequence, 221 residues long: UPF0758 protein KPN78578_39390 (221 aa).

The region spanning 99–221 (ALVTPSMTRE…YVSFAERGWI (123 aa)) is the MPN domain. Residues His170, His172, and Asp183 each contribute to the Zn(2+) site. The short motif at 170–183 (HNHPSGSPEPSQAD) is the JAMM motif element.

It belongs to the UPF0758 family. YicR subfamily.

In Klebsiella pneumoniae subsp. pneumoniae (strain ATCC 700721 / MGH 78578), this protein is UPF0758 protein KPN78578_39390.